Reading from the N-terminus, the 291-residue chain is Homoserine kinase (291 aa).

Residue Arg80–Ala90 coordinates ATP.

Belongs to the GHMP kinase family. Homoserine kinase subfamily.

It localises to the cytoplasm. It carries out the reaction L-homoserine + ATP = O-phospho-L-homoserine + ADP + H(+). It participates in amino-acid biosynthesis; L-threonine biosynthesis; L-threonine from L-aspartate: step 4/5. Functionally, catalyzes the ATP-dependent phosphorylation of L-homoserine to L-homoserine phosphate. The polypeptide is Homoserine kinase (Haloarcula marismortui (strain ATCC 43049 / DSM 3752 / JCM 8966 / VKM B-1809) (Halobacterium marismortui)).